The sequence spans 156 residues: 6,7-dimethyl-8-ribityllumazine synthase (156 aa).

5-amino-6-(D-ribitylamino)uracil-binding positions include F22, 57–59 (AYE), and 81–83 (TVI). 86 to 87 (GT) contributes to the (2S)-2-hydroxy-3-oxobutyl phosphate binding site. H89 functions as the Proton donor in the catalytic mechanism. Residue F114 participates in 5-amino-6-(D-ribitylamino)uracil binding. R128 contacts (2S)-2-hydroxy-3-oxobutyl phosphate.

The protein belongs to the DMRL synthase family. Forms an icosahedral capsid composed of 60 subunits, arranged as a dodecamer of pentamers.

The enzyme catalyses (2S)-2-hydroxy-3-oxobutyl phosphate + 5-amino-6-(D-ribitylamino)uracil = 6,7-dimethyl-8-(1-D-ribityl)lumazine + phosphate + 2 H2O + H(+). It participates in cofactor biosynthesis; riboflavin biosynthesis; riboflavin from 2-hydroxy-3-oxobutyl phosphate and 5-amino-6-(D-ribitylamino)uracil: step 1/2. Its function is as follows. Catalyzes the formation of 6,7-dimethyl-8-ribityllumazine by condensation of 5-amino-6-(D-ribitylamino)uracil with 3,4-dihydroxy-2-butanone 4-phosphate. This is the penultimate step in the biosynthesis of riboflavin. This is 6,7-dimethyl-8-ribityllumazine synthase from Escherichia coli O45:K1 (strain S88 / ExPEC).